The sequence spans 290 residues: Arylamine N-acetyltransferase 1 (290 aa).

Methionine 1 is subject to N-acetylmethionine. Serine 103 is a binding site for CoA. 106–107 provides a ligand contact to substrate; the sequence is IH. Tyrosine 208 is a CoA binding site.

This sequence belongs to the arylamine N-acetyltransferase family.

Its subcellular location is the cytoplasm. The catalysed reaction is an arylamine + acetyl-CoA = an N-acetylarylamine + CoA. Participates in the detoxification of a plethora of hydrazine and arylamine drugs. This chain is Arylamine N-acetyltransferase 1 (NAT1), found in Bos taurus (Bovine).